A 127-amino-acid chain; its full sequence is UPF0166 protein PYRAB06660 (127 aa).

It belongs to the UPF0166 family.

The polypeptide is UPF0166 protein PYRAB06660 (Pyrococcus abyssi (strain GE5 / Orsay)).